We begin with the raw amino-acid sequence, 78 residues long: Conotoxin ba1890.8 (78 aa).

An N-terminal signal peptide occupies residues 1 to 22; that stretch reads MKTSGRLLFLCLAVGLLLESQA. Positions 23 to 61 are excised as a propeptide; it reads HPIADAEDATRNVGSDGTSVELSEILERGQDSSAEKGQR. The disordered stretch occupies residues 25–78; sequence IADAEDATRNVGSDGTSVELSEILERGQDSSAEKGQRQNDHDVDESGHDIPFPS. Over residues 34–43 the composition is skewed to polar residues; it reads NVGSDGTSVE. Basic and acidic residues predominate over residues 47–72; sequence ILERGQDSSAEKGQRQNDHDVDESGH. Residue Q62 is modified to Pyrrolidone carboxylic acid.

It belongs to the conotoxin H superfamily. In terms of tissue distribution, expressed by the venom duct.

It is found in the secreted. Its function is as follows. Probable toxin. The chain is Conotoxin ba1890.8 from Conus bayani (Bayan's cone).